Consider the following 408-residue polypeptide: COP9 signalosome complex subunit 4 (408 aa).

The PCI domain occupies 194 to 374 (RIQDARRRFL…GIIYFESNTT (181 aa)).

This sequence belongs to the CSN4 family. As to quaternary structure, component of the COP9 signalosome (CSN) complex.

It is found in the cytoplasm. Its subcellular location is the nucleus. Component of the COP9 signalosome (CSN) complex that acts as an regulator of the ubiquitin (Ubl) conjugation pathway by mediating the deneddylation of the cullin subunit of SCF-type E3 ubiquitin-protein ligase complexes. The CSN complex seems to link protein degradation to sexual development. Required for fruit body formation. In Emericella nidulans (strain FGSC A4 / ATCC 38163 / CBS 112.46 / NRRL 194 / M139) (Aspergillus nidulans), this protein is COP9 signalosome complex subunit 4 (csnD).